The primary structure comprises 249 residues: Elongator complex protein 6 homolog (249 aa).

It belongs to the ELP6 family. As to quaternary structure, component of the elongator complex.

Its subcellular location is the cytoplasm. The protein localises to the nucleus. The protein operates within tRNA modification; 5-methoxycarbonylmethyl-2-thiouridine-tRNA biosynthesis. Component of the elongator complex which is required for multiple tRNA modifications, including mcm5U (5-methoxycarbonylmethyl uridine), mcm5s2U (5-methoxycarbonylmethyl-2-thiouridine), and ncm5U (5-carbamoylmethyl uridine). The elongator complex catalyzes formation of carboxymethyluridine in the wobble base at position 34 in tRNAs. The polypeptide is Elongator complex protein 6 homolog (Schizosaccharomyces pombe (strain 972 / ATCC 24843) (Fission yeast)).